Here is a 323-residue protein sequence, read N- to C-terminus: Acetyl-coenzyme A carboxylase carboxyl transferase subunit alpha (323 aa).

Positions 39-293 (RLSKKSQQLT…RRALADSLRQ (255 aa)) constitute a CoA carboxyltransferase C-terminal domain.

The protein belongs to the AccA family. Acetyl-CoA carboxylase is a heterohexamer composed of biotin carboxyl carrier protein (AccB), biotin carboxylase (AccC) and two subunits each of ACCase subunit alpha (AccA) and ACCase subunit beta (AccD).

The protein resides in the cytoplasm. It catalyses the reaction N(6)-carboxybiotinyl-L-lysyl-[protein] + acetyl-CoA = N(6)-biotinyl-L-lysyl-[protein] + malonyl-CoA. It participates in lipid metabolism; malonyl-CoA biosynthesis; malonyl-CoA from acetyl-CoA: step 1/1. Its function is as follows. Component of the acetyl coenzyme A carboxylase (ACC) complex. First, biotin carboxylase catalyzes the carboxylation of biotin on its carrier protein (BCCP) and then the CO(2) group is transferred by the carboxyltransferase to acetyl-CoA to form malonyl-CoA. The sequence is that of Acetyl-coenzyme A carboxylase carboxyl transferase subunit alpha from Paraburkholderia phytofirmans (strain DSM 17436 / LMG 22146 / PsJN) (Burkholderia phytofirmans).